We begin with the raw amino-acid sequence, 633 residues long: GRAM domain-containing protein 4 (633 aa).

3 disordered regions span residues 1 to 46 (MGIA…VRPR), 72 to 109 (LAES…AGPG), and 182 to 216 (VLKA…RSQG). A compositionally biased stretch (basic and acidic residues) spans 27-39 (PWDKGLSGREPPR). Phosphoserine occurs at positions 75 and 79. The span at 95–104 (SPRDSEELRD) shows a compositional bias: basic and acidic residues. The stretch at 134-190 (HLEIALLEKHFLQEELRKLREETNSEMLRQELDRERQRRIELEQKMQEVLKARSEEQ) forms a coiled coil. Over residues 190 to 205 (QPAQPQQPPKGQSQAS) the composition is skewed to low complexity. Transmembrane regions (helical) follow at residues 295–315 (VYMN…LAIL), 389–409 (TTQK…FFPY), and 411–431 (LVGL…DFIF). Residues 500–578 (GNFHEIFNLT…MDITDIQKYK (79 aa)) form the GRAM domain.

Interacts with RTN4 (isoform B).

Its subcellular location is the mitochondrion membrane. The protein resides in the endoplasmic reticulum membrane. In terms of biological role, plays a role as a mediator of E2F1-induced apoptosis in the absence of p53/TP53. Inhibits TLR9 response to nucelic acids and regulates TLR9-mediated innate immune response. In Mus musculus (Mouse), this protein is GRAM domain-containing protein 4.